The primary structure comprises 228 residues: UPF0173 metal-dependent hydrolase Tpen_1493 (228 aa).

This sequence belongs to the UPF0173 family.

The sequence is that of UPF0173 metal-dependent hydrolase Tpen_1493 from Thermofilum pendens (strain DSM 2475 / Hrk 5).